The primary structure comprises 778 residues: Ribonucleoside-diphosphate reductase large subunit (778 aa).

Residues serine 177, 192-193 (SC), glycine 221, 419-423 (NLCIE), and 613-617 (PTATS) contribute to the substrate site. Cysteine 193 and cysteine 439 are disulfide-bonded. The active-site Proton acceptor is the asparagine 419. The active-site Cysteine radical intermediate is cysteine 421. Glutamate 423 serves as the catalytic Proton acceptor.

The protein belongs to the ribonucleoside diphosphate reductase large chain family. As to quaternary structure, heterotetramer composed of a homodimer of the large subunit (R1) and a homodimer of the small subunit (R2). Larger multisubunit protein complex are also active, composed of (R1)n(R2)n.

The enzyme catalyses a 2'-deoxyribonucleoside 5'-diphosphate + [thioredoxin]-disulfide + H2O = a ribonucleoside 5'-diphosphate + [thioredoxin]-dithiol. Under complex allosteric control mediated by deoxynucleoside triphosphates and ATP binding. The type of nucleotide bound at the specificity site determines substrate preference. It seems probable that ATP makes the enzyme reduce CDP and UDP, dGTP favors ADP reduction and dTTP favors GDP reduction. In terms of biological role, ribonucleoside-diphosphate reductase holoenzyme provides the precursors necessary for viral DNA synthesis. Allows virus growth in non-dividing cells. Catalyzes the biosynthesis of deoxyribonucleotides from the corresponding ribonucleotides. In Ornithodoros (relapsing fever ticks), this protein is Ribonucleoside-diphosphate reductase large subunit.